Reading from the N-terminus, the 78-residue chain is MFKTINKSITSILLFMISCYQKWFSPFFGPRCRFIPSCSSYGYEAITRHGPWKGGWLTLRRLSRCHPLTPCGCDPVPD.

This sequence belongs to the UPF0161 family.

Its subcellular location is the cell inner membrane. Could be involved in insertion of integral membrane proteins into the membrane. In Prochlorococcus marinus subsp. pastoris (strain CCMP1986 / NIES-2087 / MED4), this protein is Putative membrane protein insertion efficiency factor.